Consider the following 190-residue polypeptide: Putative manganese efflux pump MntP (190 aa).

The next 5 helical transmembrane spans lie at 37-57, 64-84, 111-131, 135-155, and 164-184; these read LILA…GWGI, LSFI…GVGA, LILG…MAFV, IITL…VGAW, and FGGW…GNIL.

The protein belongs to the MntP (TC 9.B.29) family.

It localises to the cell membrane. In terms of biological role, probably functions as a manganese efflux pump. In Corynebacterium efficiens (strain DSM 44549 / YS-314 / AJ 12310 / JCM 11189 / NBRC 100395), this protein is Putative manganese efflux pump MntP.